The primary structure comprises 487 residues: N-succinylglutamate 5-semialdehyde dehydrogenase (487 aa).

Residue 221 to 226 (GSSDTG) coordinates NAD(+). Residues glutamate 244 and cysteine 278 contribute to the active site.

It belongs to the aldehyde dehydrogenase family. AstD subfamily.

It carries out the reaction N-succinyl-L-glutamate 5-semialdehyde + NAD(+) + H2O = N-succinyl-L-glutamate + NADH + 2 H(+). Its pathway is amino-acid degradation; L-arginine degradation via AST pathway; L-glutamate and succinate from L-arginine: step 4/5. Catalyzes the NAD-dependent reduction of succinylglutamate semialdehyde into succinylglutamate. This is N-succinylglutamate 5-semialdehyde dehydrogenase from Burkholderia thailandensis (strain ATCC 700388 / DSM 13276 / CCUG 48851 / CIP 106301 / E264).